We begin with the raw amino-acid sequence, 85 residues long: V-type proton ATPase subunit f (85 aa).

The Lumenal portion of the chain corresponds to 1–10 (MRPVVSTGKA). A helical membrane pass occupies residues 11-31 (WCCTVLSAFGVVILSVIAHLF). Topologically, residues 32–54 (NTNHESFVGSINDPEDGPAVAHT) are cytoplasmic. Residues 55–75 (VYLAALVYLVFFVFCGFQVYL) form a helical membrane-spanning segment. Over 76–85 (ARRKPSIELR) the chain is Lumenal.

V-ATPase is a heteromultimeric enzyme composed of a peripheral catalytic V1 complex (components A to H) attached to an integral membrane V0 proton pore complex (components: a, c, c', c'', d, e, f and VOA1).

It is found in the endoplasmic reticulum membrane. The protein localises to the vacuole membrane. Its function is as follows. Accessory component of the V0 complex of vacuolar(H+)-ATPase (V-ATPase), a multisubunit enzyme composed of a peripheral complex (V1) that hydrolyzes ATP and a membrane integral complex (V0) that translocates protons. V-ATPase is responsible for acidifying and maintaining the pH of intracellular compartments. In Saccharomyces cerevisiae (strain ATCC 204508 / S288c) (Baker's yeast), this protein is V-type proton ATPase subunit f.